Consider the following 1896-residue polypeptide: MPLPPRSLQVLLLLLLLLLLLPGMWAEAGLPRAGGGSQPPFRTFSASDWGLTHLVVHEQTGEVYVGAVNRIYKLSGNLTLLRAHVTGPVEDNEKCYPPPSVQSCPHGLGSTDNVNKLLLLDYAANRLLACGSASQGICQFLRLDDLFKLGEPHHRKEHYLSSVQEAGSMAGVLIAGPPGQGQAKLFVGTPIDGKSEYFPTLSSRRLMANEEDADMFGFVYQDEFVSSQLKIPSDTLSKFPAFDIYYVYSFRSEQFVYYLTLQLDTQLTSPDAAGEHFFTSKIVRLCVDDPKFYSYVEFPIGCEQAGVEYRLVQDAYLSRPGRALAHQLGLAEDEDVLFTVFAQGQKNRVKPPKESALCLFTLRAIKEKIKERIQSCYRGEGKLSLPWLLNKELGCINSPLQIDDDFCGQDFNQPLGGTVTIEGTPLFVDKDDGLTAVAAYDYRGRTVVFAGTRSGRIRKILVDLSNPGGRPALAYESVVAQEGSPILRDLVLSPNHQYLYAMTEKQVTRVPVESCVQYTSCELCLGSRDPHCGWCVLHSICSRRDACERADEPQRFAADLLQCVQLTVQPRNVSVTMSQVPLVLQAWNVPDLSAGVNCSFEDFTESESVLEDGRIHCRSPSAREVAPITRGQGDQRVVKLYLKSKETGKKFASVDFVFYNCSVHQSCLSCVNGSFPCHWCKYRHVCTHNVADCAFLEGRVNVSEDCPQILPSTQIYVPVGVVKPITLAARNLPQPQSGQRGYECLFHIPGSPARVTALRFNSSSLQCQNSSYSYEGNDVSDLPVNLSVVWNGNFVIDNPQNIQAHLYKCPALRESCGLCLKADPRFECGWCVAERRCSLRHHCAADTPASWMHARHGSSRCTDPKILKLSPETGPRQGGTRLTITGENLGLRFEDVRLGVRVGKVLCSPVESEYISAEQIVCEIGDASSVRAHDALVEVCVRDCSPHYRALSPKRFTFVTPTFYRVSPSRGPLSGGTWIGIEGSHLNAGSDVAVSVGGRPCSFSWRNSREIRCLTPPGQSPGSAPIIININRAQLTNPEVKYNYTEDPTILRIDPEWSINSGGTLLTVTGTNLATVREPRIRAKYGGIERENGCLVYNDTTMVCRAPSVANPVRSPPELGERPDELGFVMDNVRSLLVLNSTSFLYYPDPVLEPLSPTGLLELKPSSPLILKGRNLLPPAPGNSRLNYTVLIGSTPCTLTVSETQLLCEAPNLTGQHKVTVRAGGFEFSPGTLQVYSDSLLTLPAIVGIGGGGGLLLLVIVAVLIAYKRKSRDADRTLKRLQLQMDNLESRVALECKEAFAELQTDIHELTNDLDGAGIPFLDYRTYAMRVLFPGIEDHPVLKEMEVQANVEKSLTLFGQLLTKKHFLLTFIRTLEAQRSFSMRDRGNVASLIMTALQGEMEYATGVLKQLLSDLIEKNLESKNHPKLLLRRTESVAEKMLTNWFTFLLYKFLKECAGEPLFMLYCAIKQQMEKGPIDAITGEARYSLSEDKLIRQQIDYKTLTLNCVNPENENAPEVPVKGLDCDTVTQAKEKLLDAAYKGVPYSQRPKAADMDLEWRQGRMARIILQDEDVTTKIDNDWKRLNTLAHYQVTDGSSVALVPKQTSAYNISNSSTFTKSLSRYESMLRTASSPDSLRSRTPMITPDLESGTKLWHLVKNHDHLDQREGDRGSKMVSEIYLTRLLATKGTLQKFVDDLFETIFSTAHRGSALPLAIKYMFDFLDEQADKHQIHDADVRHTWKSNCLPLRFWVNVIKNPQFVFDIHKNSITDACLSVVAQTFMDSCSTSEHKLGKDSPSNKLLYAKDIPNYKSWVERYYADIAKMPAISDQDMSAYLAEQSRLHLSQFNSMSALHEIYSYITKYKDEILAALEKDEQARRQRLRSKLEQVVDTMALSS.

Positions 1-26 are cleaved as a signal peptide; that stretch reads MPLPPRSLQVLLLLLLLLLLLPGMWA. In terms of domain architecture, Sema spans 27 to 512; the sequence is EAGLPRAGGG…TEKQVTRVPV (486 aa). The Extracellular segment spans residues 27–1244; that stretch reads EAGLPRAGGG…VYSDSLLTLP (1218 aa). N-linked (GlcNAc...) asparagine glycosylation is present at N77. 10 disulfides stabilise this stretch: C95-C104, C130-C138, C286-C407, C302-C358, C376-C395, C515-C532, C521-C563, C524-C541, C535-C547, and C598-C617. N-linked (GlcNAc...) asparagine glycosylation is found at N660, N672, and N701. 4 IPT/TIG domains span residues 864–959, 961–1045, 1048–1147, and 1150–1236; these read PKIL…FTFV, PTFY…YNYT, PTIL…FLYY, and PVLE…LQVY. N-linked (GlcNAc...) asparagine glycosylation is present at N1043. Residues N1187 and N1212 are each glycosylated (N-linked (GlcNAc...) asparagine). A helical transmembrane segment spans residues 1245 to 1265; the sequence is AIVGIGGGGGLLLLVIVAVLI. Residues 1264 to 1317 adopt a coiled-coil conformation; it reads LIAYKRKSRDADRTLKRLQLQMDNLESRVALECKEAFAELQTDIHELTNDLDGA. At 1266 to 1896 the chain is on the cytoplasmic side; the sequence is AYKRKSRDAD…QVVDTMALSS (631 aa).

It belongs to the plexin family. Interacts directly with NRP1 and NRP2. Interacts with PLXN1B. Interacts with FARP2, RND1 and KDR/VEGFR2. Binding of SEMA3A leads to dissociation of FARP2. Interacts with CRMP1, DPYSL2/CRMP2, DPYSL3/CRMP3 and DPYSL4/CRMP4. Interacts (via TIG domains) with TREM2; the interaction mediates SEMA6D binding and signaling through TYROBP. As to expression, detected in fetal brain, lung, liver and kidney.

It localises to the cell membrane. Functionally, coreceptor for SEMA3A, SEMA3C, SEMA3F and SEMA6D. Necessary for signaling by class 3 semaphorins and subsequent remodeling of the cytoskeleton. Plays a role in axon guidance, invasive growth and cell migration. Class 3 semaphorins bind to a complex composed of a neuropilin and a plexin. The plexin modulates the affinity of the complex for specific semaphorins, and its cytoplasmic domain is required for the activation of down-stream signaling events in the cytoplasm. Acts as coreceptor of TREM2 for SEMA6D in dendritic cells and is involved in the generation of immune responses and skeletal homeostasis. The polypeptide is Plexin-A1 (Homo sapiens (Human)).